Reading from the N-terminus, the 214-residue chain is Phosphatidylcholine transfer protein (214 aa).

The residue at position 1 (methionine 1) is an N-acetylmethionine. An START domain is found at 1 to 212; the sequence is MELAAGSFSE…MARACQNYLK (212 aa). 2 residues coordinate a 1,2-diacyl-sn-glycero-3-phosphocholine: tyrosine 72 and arginine 78. Serine 139 bears the Phosphoserine mark. Glutamine 157 lines the a 1,2-diacyl-sn-glycero-3-phosphocholine pocket.

Interacts with ACOT13/THEM2. In terms of tissue distribution, highest expression in liver, placenta, testis, kidney and heart. Low levels in brain and lung. No expression detected in thymus.

The protein localises to the cytoplasm. Its function is as follows. Catalyzes the transfer of phosphatidylcholine between membranes. Binds a single lipid molecule. The polypeptide is Phosphatidylcholine transfer protein (PCTP) (Homo sapiens (Human)).